Consider the following 178-residue polypeptide: tRNA (cytidine(56)-2'-O)-methyltransferase (178 aa).

Residue leucine 88 coordinates S-adenosyl-L-methionine.

It belongs to the aTrm56 family. As to quaternary structure, homodimer.

It localises to the cytoplasm. The catalysed reaction is cytidine(56) in tRNA + S-adenosyl-L-methionine = 2'-O-methylcytidine(56) in tRNA + S-adenosyl-L-homocysteine + H(+). Specifically catalyzes the AdoMet-dependent 2'-O-ribose methylation of cytidine at position 56 in tRNAs. In Methanopyrus kandleri (strain AV19 / DSM 6324 / JCM 9639 / NBRC 100938), this protein is tRNA (cytidine(56)-2'-O)-methyltransferase.